A 329-amino-acid chain; its full sequence is MMSSSSSEIDVVKTRIPTYDEDDNTVLYAYETKPEFVNKELNIVSDASCNTEEQQKTVNDVLIHCQVIYDAMQNLDKKIDVIRRKVSKIQRFCVKSLWTNRKRYGYKKYSYRLAKKLKLKKMKKNEVYESFSYPESYSPTLPVSRCENNSPSNFPRPSFCMEEYRRAEPEEDPILSRTPSPVHPSDFSEHNYQPYYASDGATYGSSSGTCRGNPRADGIHNTYSTDHASAAPPSVTGSLFGNDCYIEEGSITKHPSTWSVEAVVLFLKQTDPLALCPLVDLFRSHEIDGKALLLLTSDVLLKHLGVKLGTAVKLCYYIDRLKQGKCFEN.

Residues Ser138 and Ser238 each carry the phosphoserine modification. Residues 258–325 (WSVEAVVLFL…YYIDRLKQGK (68 aa)) form the SAM domain.

It belongs to the SCM family.

It is found in the nucleus. Functionally, putative Polycomb group (PcG) protein. PcG proteins act by forming multiprotein complexes, which are required to maintain the transcriptionally repressive state of homeotic genes throughout development. May be involved in spermatogenesis during sexual maturation. This Nomascus leucogenys (Northern white-cheeked gibbon) protein is Sex comb on midleg-like protein 1 (SCML1).